A 314-amino-acid polypeptide reads, in one-letter code: Methionyl-tRNA formyltransferase (314 aa).

108 to 111 provides a ligand contact to (6S)-5,6,7,8-tetrahydrofolate; it reads SLLP.

This sequence belongs to the Fmt family.

The catalysed reaction is L-methionyl-tRNA(fMet) + (6R)-10-formyltetrahydrofolate = N-formyl-L-methionyl-tRNA(fMet) + (6S)-5,6,7,8-tetrahydrofolate + H(+). Its function is as follows. Attaches a formyl group to the free amino group of methionyl-tRNA(fMet). The formyl group appears to play a dual role in the initiator identity of N-formylmethionyl-tRNA by promoting its recognition by IF2 and preventing the misappropriation of this tRNA by the elongation apparatus. The protein is Methionyl-tRNA formyltransferase of Akkermansia muciniphila (strain ATCC BAA-835 / DSM 22959 / JCM 33894 / BCRC 81048 / CCUG 64013 / CIP 107961 / Muc).